Here is a 945-residue protein sequence, read N- to C-terminus: Argonaute protein wago-1 (945 aa).

Pro residues predominate over residues 1 to 20 (MSPHPPQPHPPMPPMPPVTA). The disordered stretch occupies residues 1 to 41 (MSPHPPQPHPPMPPMPPVTAPPGAMTPMPPVPADAQKLHQS). A PAZ domain is found at 322-432 (TVIQKLFDIT…FPAELMTVSR (111 aa)). Residues 636–899 (VKDGKRLTLE…PLYVANEYAK (264 aa)) enclose the Piwi domain.

Belongs to the Argonaute family. WAGO subfamily. In terms of assembly, interacts with rde-12. Interacts with znfx-1. In terms of tissue distribution, enriched in sperm and oocytes.

The protein resides in the cytoplasmic granule. Its function is as follows. Argonaute protein which is involved in the endogenous small interfering RNA (endo-siRNA) pathway. Interacts with secondary 22G-RNAs, which are RNA-dependent RNA polymerase-derived endo-siRNAs, typically 22 nucleotides in length with a 5'guanosine residue. In the germline, functions in a genome surveillance system to silence transposons and aberrant transcripts. The sequence is that of Argonaute protein wago-1 from Caenorhabditis elegans.